The sequence spans 262 residues: T-cell surface glycoprotein YE1/48 (262 aa).

Over 1–44 (MSEQEVTYSMVRFHKSAGLQKQVRPEETKGPREAGYRRCSFHWK) the chain is Cytoplasmic. A helical; Signal-anchor for type II membrane protein transmembrane segment spans residues 45–66 (FIVIALGIFCFLLLVAVSVLAI). Residues 67–262 (KIFQYDQQKN…CGKRLDKFPH (196 aa)) are Extracellular-facing. N-linked (GlcNAc...) asparagine glycans are attached at residues N86, N103, and N123. The Cell attachment site signature appears at 137–139 (RGD). A C-type lectin domain is found at 138 to 257 (GDKVYWFCYG…VFICICGKRL (120 aa)). Disulfide bonds link C145/C150, C163/C251, C167/C253, and C232/C245.

As to quaternary structure, homodimer; disulfide-linked. In terms of tissue distribution, high, in T-lymphoma lines, very low in normal lymphocytes.

Its subcellular location is the membrane. In terms of biological role, receptor on natural killer (NK) cells for H-2d alleles. Inhibits the activity of NK cells thus preventing cell lysis. This Mus musculus (Mouse) protein is T-cell surface glycoprotein YE1/48 (Klra1).